The chain runs to 339 residues: Phosphate acyltransferase (339 aa).

This sequence belongs to the PlsX family. In terms of assembly, homodimer. Probably interacts with PlsY.

It localises to the cytoplasm. The enzyme catalyses a fatty acyl-[ACP] + phosphate = an acyl phosphate + holo-[ACP]. It participates in lipid metabolism; phospholipid metabolism. Catalyzes the reversible formation of acyl-phosphate (acyl-PO(4)) from acyl-[acyl-carrier-protein] (acyl-ACP). This enzyme utilizes acyl-ACP as fatty acyl donor, but not acyl-CoA. This Clostridium perfringens (strain SM101 / Type A) protein is Phosphate acyltransferase.